Here is a 157-residue protein sequence, read N- to C-terminus: Methylamine utilization protein MauL (157 aa).

It functions in the pathway one-carbon metabolism; methylamine degradation. Functionally, probably involved in TTQ prosthetic group biosynthesis. This chain is Methylamine utilization protein MauL (mauL), found in Methylobacillus flagellatus (strain ATCC 51484 / DSM 6875 / VKM B-1610 / KT).